The primary structure comprises 132 residues: Arsenate reductase 1 (132 aa).

Residues Cys-10, Cys-82, and Cys-89 each act as nucleophile in the active site. Disulfide bonds link Cys-10–Cys-82 and Cys-82–Cys-89.

It belongs to the low molecular weight phosphotyrosine protein phosphatase family. Thioredoxin-coupled ArsC subfamily.

The protein localises to the cytoplasm. It carries out the reaction arsenate + [thioredoxin]-dithiol + H(+) = arsenite + [thioredoxin]-disulfide + H2O. Functionally, catalyzes the reduction of arsenate [As(V)] to arsenite [As(III)]. The chain is Arsenate reductase 1 from Staphylococcus epidermidis (strain ATCC 35984 / DSM 28319 / BCRC 17069 / CCUG 31568 / BM 3577 / RP62A).